Consider the following 261-residue polypeptide: Shikimate dehydrogenase (NADP(+)) (261 aa).

Residues 13-15 (SLS) and Thr60 each bind shikimate. Residue Lys64 is the Proton acceptor of the active site. Glu76 is an NADP(+) binding site. 2 residues coordinate shikimate: Asn85 and Asp100. NADP(+) contacts are provided by residues 122 to 126 (GAGGA), 143 to 148 (NRTVER), and Ile203. Tyr205 contacts shikimate. Gly226 serves as a coordination point for NADP(+).

This sequence belongs to the shikimate dehydrogenase family. In terms of assembly, homodimer.

The catalysed reaction is shikimate + NADP(+) = 3-dehydroshikimate + NADPH + H(+). The protein operates within metabolic intermediate biosynthesis; chorismate biosynthesis; chorismate from D-erythrose 4-phosphate and phosphoenolpyruvate: step 4/7. Functionally, involved in the biosynthesis of the chorismate, which leads to the biosynthesis of aromatic amino acids. Catalyzes the reversible NADPH linked reduction of 3-dehydroshikimate (DHSA) to yield shikimate (SA). This is Shikimate dehydrogenase (NADP(+)) from Exiguobacterium sp. (strain ATCC BAA-1283 / AT1b).